The following is a 1637-amino-acid chain: Kinesin-like protein KIF21B (1637 aa).

A Kinesin motor domain is found at 8–370 (CVKVAVRIRP…LKYANRARNI (363 aa)). 87 to 94 (GQTGAGKT) contributes to the ATP binding site. Coiled coils occupy residues 376–604 (VNQD…EEEG) and 631–824 (NFQA…ALRR). The segment at 400 to 1099 (MEYKAGKRVI…LQALIYNVQQ (700 aa)) is interaction with TRIM3. Positions 509–533 (ASARSPYSLGASPAAPAFGGSPASS) are enriched in low complexity. Disordered regions lie at residues 509-538 (ASAR…EDAS) and 552-628 (KKKE…PEEK). Residues 578–627 (NSEETDENEAEEEEEERDESGCEEEEGREDEDEDSGSEESLVDSDSDPEE) are compositionally biased toward acidic residues. Serine 579 is modified (phosphoserine). Threonine 582 is subject to Phosphothreonine. Disordered stretches follow at residues 830–865 (SERV…GARS) and 880–906 (FLGD…GASQ). Positions 846–865 (SGAEVSASTTSSEAESGARS) are enriched in low complexity. Residues 928–1016 (MQRMTIVNLE…EETKEELDST (89 aa)) are a coiled coil. Phosphoserine is present on residues serine 1149, serine 1167, and serine 1215. Residues 1194 to 1217 (RTVSLPTRGSTFPRQSRATETSPL) are compositionally biased toward polar residues. The tract at residues 1194–1251 (RTVSLPTRGSTFPRQSRATETSPLTRRKSYDRGQPIRSTDVGFTPPSSPPTRPRNDRN) is disordered. Threonine 1237 bears the Phosphothreonine mark. Position 1241 is a phosphoserine (serine 1241). WD repeat units follow at residues 1306–1343 (GHTK…EIAA), 1346–1384 (GHPN…KCIR), 1410–1448 (QGEH…PVGK), 1451–1493 (GHIG…TGTI), 1502–1539 (PHYD…LIQQ), 1543–1582 (AHKD…PIGE), and 1585–1622 (GHDS…TPCL).

It belongs to the TRAFAC class myosin-kinesin ATPase superfamily. Kinesin family. Interacts with TRIM3; the interaction positively affects motility of KIF21B. Interacts with GABARAP and GABA(A) receptor subunits: GABRG2, GABRA1 and GABRA2. May interact with GABA(A) receptor subunits: GABRB2 and GABRB3.

It localises to the cytoplasm. Its subcellular location is the cytoskeleton. The protein resides in the cell projection. The protein localises to the dendrite. It is found in the growth cone. It localises to the axon. Its subcellular location is the cytoplasmic vesicle. In terms of biological role, plus-end directed microtubule-dependent motor protein which displays processive activity. Is involved in regulation of microtubule dynamics, synapse function and neuronal morphology, including dendritic tree branching and spine formation. Plays a role in lerning and memory. Involved in delivery of gamma-aminobutyric acid (GABA(A)) receptor to cell surface. The protein is Kinesin-like protein KIF21B (KIF21B) of Homo sapiens (Human).